The primary structure comprises 335 residues: Foldase protein PrsA (335 aa).

The first 22 residues, 1–22 (MRSAKKLLSVLCLGVFILTFTA), serve as a signal peptide directing secretion. Cysteine 23 is lipidated: N-palmitoyl cysteine. Residue cysteine 23 is the site of S-diacylglycerol cysteine attachment. The 92-residue stretch at 194-285 (PNTMNVSHIL…FGYHIIKINS (92 aa)) folds into the PpiC domain.

Belongs to the PrsA family.

It localises to the cell membrane. It carries out the reaction [protein]-peptidylproline (omega=180) = [protein]-peptidylproline (omega=0). Plays a major role in protein secretion by helping the post-translocational extracellular folding of several secreted proteins. The protein is Foldase protein PrsA of Clostridium botulinum (strain Loch Maree / Type A3).